A 616-amino-acid polypeptide reads, in one-letter code: Dihydroxy-acid dehydratase (616 aa).

Residue Asp-81 participates in Mg(2+) binding. Cys-122 lines the [2Fe-2S] cluster pocket. Positions 123 and 124 each coordinate Mg(2+). At Lys-124 the chain carries N6-carboxylysine. Cys-195 is a binding site for [2Fe-2S] cluster. Glu-491 contributes to the Mg(2+) binding site. Ser-517 acts as the Proton acceptor in catalysis.

The protein belongs to the IlvD/Edd family. Homodimer. [2Fe-2S] cluster is required as a cofactor. The cofactor is Mg(2+).

The enzyme catalyses (2R)-2,3-dihydroxy-3-methylbutanoate = 3-methyl-2-oxobutanoate + H2O. The catalysed reaction is (2R,3R)-2,3-dihydroxy-3-methylpentanoate = (S)-3-methyl-2-oxopentanoate + H2O. Its pathway is amino-acid biosynthesis; L-isoleucine biosynthesis; L-isoleucine from 2-oxobutanoate: step 3/4. The protein operates within amino-acid biosynthesis; L-valine biosynthesis; L-valine from pyruvate: step 3/4. Functions in the biosynthesis of branched-chain amino acids. Catalyzes the dehydration of (2R,3R)-2,3-dihydroxy-3-methylpentanoate (2,3-dihydroxy-3-methylvalerate) into 2-oxo-3-methylpentanoate (2-oxo-3-methylvalerate) and of (2R)-2,3-dihydroxy-3-methylbutanoate (2,3-dihydroxyisovalerate) into 2-oxo-3-methylbutanoate (2-oxoisovalerate), the penultimate precursor to L-isoleucine and L-valine, respectively. The protein is Dihydroxy-acid dehydratase of Shewanella woodyi (strain ATCC 51908 / MS32).